The primary structure comprises 35 residues: ECLGFGKGCNPSNDQCCKSANLVCSRKHRWCKYEI.

3 disulfide bridges follow: C2–C17, C9–C24, and C16–C31.

The protein belongs to the neurotoxin 10 (Hwtx-1) family. 22 (Htx-4) subfamily. As to quaternary structure, monomer. Expressed by the venom gland.

It localises to the secreted. In terms of biological role, inhibits selectively tetrodotoxin-sensitive voltage-gated sodium channels (Nav). Does not act by binding to receptor site 3 to slow the inactivation kinetics of sodium currents. The polypeptide is Mu-theraphotoxin-Hhn1a (Cyriopagopus hainanus (Chinese bird spider)).